The sequence spans 98 residues: Large ribosomal subunit protein uL23 (98 aa).

This sequence belongs to the universal ribosomal protein uL23 family. In terms of assembly, part of the 50S ribosomal subunit. Contacts protein L29, and trigger factor when it is bound to the ribosome.

In terms of biological role, one of the early assembly proteins it binds 23S rRNA. One of the proteins that surrounds the polypeptide exit tunnel on the outside of the ribosome. Forms the main docking site for trigger factor binding to the ribosome. In Rickettsia typhi (strain ATCC VR-144 / Wilmington), this protein is Large ribosomal subunit protein uL23.